A 594-amino-acid polypeptide reads, in one-letter code: Suppressor of hairless protein (594 aa).

The disordered stretch occupies residues 20-87 (ETTVVNPNGS…QQQQQHQQQM (68 aa)). The span at 58–87 (QQQQQQLQVHHQQQQQQQQQQQQQQHQQQM) shows a compositional bias: low complexity. DNA-binding regions lie at residues 131-141 (QKSYGNEKRFF), 239-244 (SKPSKK), and 266-271 (RLRSQT). The region spanning 429-519 (PIVNSLNLNG…YATGLTFTYT (91 aa)) is the IPT/TIG domain. Low complexity-rich tracts occupy residues 542-562 (NNNN…AGSP) and 569-580 (QQQQQQHQALPS). Residues 542-594 (NNNNNITSISNNNNSNNAGSPAAGGGLQQQQQQHQALPSISEVQWNSHGSGLS) form a disordered region. The span at 582–594 (SEVQWNSHGSGLS) shows a compositional bias: polar residues.

The protein belongs to the Su(H) family. As to quaternary structure, interacts with activated cleaved Notch. Interacts with Hairless, this interaction preventing its DNA-binding activity. Interacts with insv (via BEN domain).

The protein resides in the nucleus. Its subcellular location is the cytoplasm. Functionally, transcriptional regulator that plays a central role in Notch signaling, a signaling pathway involved in cell-cell communication that regulates a broad spectrum of cell-fate determinations. Binds directly the 5'-GTGRGAR-3' DNA consensus sequence, which is present in the regulatory region of several genes. Acts as a transcriptional repressor when it is not associated with Notch proteins. When associated with some Notch protein, it acts as a transcriptional activator that activates transcription of Notch target genes. Required for transcription of Sim. Specifically binds to the immunoglobulin kappa-type J segment recombination signal sequence. Required for neurogenesis in imaginal disks. In the larval brain, might play a role as a transducer of Notch signaling during type II neuroblast development. Also functions independently of the Notch pathway, in the development of the bristle sensory organ precursor cell. This is Suppressor of hairless protein (Su(H)) from Drosophila melanogaster (Fruit fly).